Consider the following 607-residue polypeptide: Matrix metalloproteinase-16 (607 aa).

An N-terminal signal peptide occupies residues 1 to 31 (MILLTFSTGRRLDFVHHSGVFFLQTLLWILC). The propeptide occupies 32 to 119 (ATVCGTEQYF…SSKFHIRRKR (88 aa)). Asn83 is a glycosylation site (N-linked (GlcNAc...) asparagine). The Cysteine switch signature appears at 99–106 (PRCGVPDQ). Cys101 is a binding site for Zn(2+). The Extracellular segment spans residues 120–564 (YALTGQKWQH…LDNTASTVKA (445 aa)). Asp183 is a binding site for Ca(2+). Zn(2+)-binding residues include His193 and Asp195. Ca(2+) contacts are provided by Asp200, Gly201, Gly203, and Phe205. Zn(2+) is bound at residue His208. Residues Gly215, Gly217, and Asp219 each coordinate Ca(2+). His221 is a binding site for Zn(2+). The Ca(2+) site is built by Asp223 and Glu226. His246 lines the Zn(2+) pocket. Glu247 is an active-site residue. Zn(2+) is bound by residues His250 and His256. The segment at 281-340 (DDLQGIQKIYGPPDKIPPPTRPLPTVPPHRSIPPADPRKNDRPKPPRPPTGRPSYPGAKP) is disordered. The segment covering 294–315 (DKIPPPTRPLPTVPPHRSIPPA) has biased composition (pro residues). 4 Hemopexin repeats span residues 340–388 (PNIC…WRGL), 389–434 (PPSI…GSGI), 436–484 (PHGI…KGIP), and 485–532 (ESPQ…FMGC). A disulfide bond links Cys343 and Cys532. The helical transmembrane segment at 565 to 585 (IAIVIPCILALCLLVLVYTVF) threads the bilayer. Topologically, residues 586-607 (QFKRKGTPRHILYCKRSMQEWV) are cytoplasmic.

It belongs to the peptidase M10A family. In terms of assembly, interacts with CSPG4 through CSPG4 chondroitin sulfate glycosaminoglycan. Zn(2+) serves as cofactor. It depends on Ca(2+) as a cofactor. Post-translationally, the precursor is cleaved by a furin endopeptidase. Expressed in heart, brain, placenta, ovary and small intestine. Isoform Short is found in the ovary.

It is found in the cell membrane. The protein resides in the secreted. Its subcellular location is the extracellular space. The protein localises to the extracellular matrix. It localises to the cell surface. With respect to regulation, TIMP-2 shows little inhibitory activity compared to TIMP-1. TIMP-1 seems to have less binding affinity than TIMP-2 for the short isoform. Its function is as follows. Endopeptidase that degrades various components of the extracellular matrix, such as collagen type III and fibronectin. Activates progelatinase A. Involved in the matrix remodeling of blood vessels. Isoform short cleaves fibronectin and also collagen type III, but at lower rate. It has no effect on type I, II, IV and V collagen. However, upon interaction with CSPG4, it may be involved in degradation and invasion of type I collagen by melanoma cells. This is Matrix metalloproteinase-16 from Homo sapiens (Human).